The following is a 376-amino-acid chain: Eugenol O-methyltransferase (376 aa).

Residues G219, D242, M263, and K276 each coordinate S-adenosyl-L-methionine. H280 functions as the Proton acceptor in the catalytic mechanism.

Belongs to the class I-like SAM-binding methyltransferase superfamily. Cation-independent O-methyltransferase family. COMT subfamily. Homodimer. As to expression, expressed predominantly in root hairs.

It carries out the reaction (E)-isoeugenol + S-adenosyl-L-methionine = (E)-isomethyleugenol + S-adenosyl-L-homocysteine + H(+). Functionally, O-methyltransferase. Substrate preference is eugenol &gt;&gt; orcinol monomethyl ether &gt; resorcinol monomethyl ether. This chain is Eugenol O-methyltransferase (EOMT), found in Sorghum bicolor (Sorghum).